A 208-amino-acid chain; its full sequence is Holliday junction branch migration complex subunit RuvA (208 aa).

The segment at 1–63 is domain I; it reads MIGMLTGRVE…QDAITLHGFL (63 aa). The domain II stretch occupies residues 64-142; that stretch reads DRDAKKTFLQ…LSQIEGASAQ (79 aa). The flexible linker stretch occupies residues 143-151; sequence AATSKSPVD. Residues 151–208 form a domain III region; the sequence is DTGTEQVVEGLISLGWRQQDAQQAVAEACAENDIPTPLATDDVPRVLRLALALMDRGR.

This sequence belongs to the RuvA family. Homotetramer. Forms an RuvA(8)-RuvB(12)-Holliday junction (HJ) complex. HJ DNA is sandwiched between 2 RuvA tetramers; dsDNA enters through RuvA and exits via RuvB. An RuvB hexamer assembles on each DNA strand where it exits the tetramer. Each RuvB hexamer is contacted by two RuvA subunits (via domain III) on 2 adjacent RuvB subunits; this complex drives branch migration. In the full resolvosome a probable DNA-RuvA(4)-RuvB(12)-RuvC(2) complex forms which resolves the HJ.

Its subcellular location is the cytoplasm. Its function is as follows. The RuvA-RuvB-RuvC complex processes Holliday junction (HJ) DNA during genetic recombination and DNA repair, while the RuvA-RuvB complex plays an important role in the rescue of blocked DNA replication forks via replication fork reversal (RFR). RuvA specifically binds to HJ cruciform DNA, conferring on it an open structure. The RuvB hexamer acts as an ATP-dependent pump, pulling dsDNA into and through the RuvAB complex. HJ branch migration allows RuvC to scan DNA until it finds its consensus sequence, where it cleaves and resolves the cruciform DNA. In Bifidobacterium longum (strain DJO10A), this protein is Holliday junction branch migration complex subunit RuvA.